Consider the following 457-residue polypeptide: tRNA modification GTPase MnmE (457 aa).

(6S)-5-formyl-5,6,7,8-tetrahydrofolate contacts are provided by arginine 25, glutamate 87, and arginine 126. In terms of domain architecture, TrmE-type G spans 223-377 (GIATAIIGRP…IEEKINQLFF (155 aa)). Asparagine 233 provides a ligand contact to K(+). GTP is bound by residues 233 to 238 (NVGKSS), 252 to 258 (TDIAGTT), and 277 to 280 (DTAG). Serine 237 provides a ligand contact to Mg(2+). K(+) is bound by residues threonine 252, isoleucine 254, and threonine 257. Threonine 258 lines the Mg(2+) pocket. Residue lysine 457 coordinates (6S)-5-formyl-5,6,7,8-tetrahydrofolate.

This sequence belongs to the TRAFAC class TrmE-Era-EngA-EngB-Septin-like GTPase superfamily. TrmE GTPase family. Homodimer. Heterotetramer of two MnmE and two MnmG subunits. It depends on K(+) as a cofactor.

It localises to the cytoplasm. Functionally, exhibits a very high intrinsic GTPase hydrolysis rate. Involved in the addition of a carboxymethylaminomethyl (cmnm) group at the wobble position (U34) of certain tRNAs, forming tRNA-cmnm(5)s(2)U34. In Streptococcus suis (strain 98HAH33), this protein is tRNA modification GTPase MnmE.